The following is a 623-amino-acid chain: Chaperone protein DnaK (623 aa).

T175 is modified (phosphothreonine; by autocatalysis). Positions 578 to 623 are disordered; sequence ANPEGAPGAGFDPNNMGGANAGNASAGNDKKDDNVVDADFKVEDDK. Residues 591-604 show a composition bias toward low complexity; sequence NNMGGANAGNASAG. The segment covering 605-623 has biased composition (basic and acidic residues); the sequence is NDKKDDNVVDADFKVEDDK.

It belongs to the heat shock protein 70 family.

In terms of biological role, acts as a chaperone. The sequence is that of Chaperone protein DnaK from Clostridium botulinum (strain 657 / Type Ba4).